The following is a 499-amino-acid chain: NADH-quinone oxidoreductase subunit 14 (499 aa).

14 helical membrane passes run 9 to 29 (ILPEVVLAGYALAALMAGAYL), 37 to 57 (TLLWVTVAAFLVVAAMVGLGN), 76 to 96 (FAKVVTLVAAAGVLAMSADYM), 104 to 124 (FEFPIIVALAVLGMMFMVSAG), 126 to 146 (LLTLYMGLELQSLALYVVAAM), 161 to 181 (FVLGSLSSGLLLYGASLVYGF), 196 to 216 (AGHLSLGVLFGLVFMLVGLSF), 235 to 255 (PTPVTAFFATAPKVAAMALIA), 269 to 289 (WSQIVAALAVMSMFLGSIAGI), 301 to 321 (SSIAHMGFALVGLAAGTAIGV), 324 to 344 (MLLYMTIYAVMNIGTFAFILS), 369 to 389 (ALAMLVLMFSLAGVPPTLGFF), 402 to 422 (GMGWLAVLGVIASVIGAFYYL), and 446 to 466 (YLALMVPALAMLVGAISMFGV).

It belongs to the complex I subunit 2 family. NDH-1 is composed of at least 14 different subunits, Nqo1 to Nqo14. The complex has a L-shaped structure, with the hydrophobic arm (subunits Nqo7, Nqo8, Nqo10 to Nqo14) embedded in the inner membrane and the hydrophilic peripheral arm (subunits Nqo1 to Nqo6, Nqo9) protruding into the bacterial cytoplasm. The hydrophilic domain contains all the redox centers.

The protein localises to the cell inner membrane. It catalyses the reaction a quinone + NADH + 5 H(+)(in) = a quinol + NAD(+) + 4 H(+)(out). Functionally, NDH-1 shuttles electrons from NADH, via FMN and iron-sulfur (Fe-S) centers, to quinones in the respiratory chain. The immediate electron acceptor for the enzyme in this species is believed to be ubiquinone. Couples the redox reaction to proton translocation (for every two electrons transferred, four hydrogen ions are translocated across the cytoplasmic membrane), and thus conserves the redox energy in a proton gradient. In Paracoccus denitrificans, this protein is NADH-quinone oxidoreductase subunit 14.